A 426-amino-acid polypeptide reads, in one-letter code: Histidine--tRNA ligase (426 aa).

It belongs to the class-II aminoacyl-tRNA synthetase family. Homodimer.

Its subcellular location is the cytoplasm. The catalysed reaction is tRNA(His) + L-histidine + ATP = L-histidyl-tRNA(His) + AMP + diphosphate + H(+). The chain is Histidine--tRNA ligase from Picosynechococcus sp. (strain ATCC 27264 / PCC 7002 / PR-6) (Agmenellum quadruplicatum).